The chain runs to 331 residues: D-lactate dehydrogenase (331 aa).

NAD(+) is bound by residues 155-156 (HI), Asp175, 206-207 (VP), Asn212, 233-235 (AAR), and Asp259. Residue Arg235 is part of the active site. The active site involves Glu264. Catalysis depends on His296, which acts as the Proton donor.

The protein belongs to the D-isomer specific 2-hydroxyacid dehydrogenase family. Homodimer.

The catalysed reaction is (R)-lactate + NAD(+) = pyruvate + NADH + H(+). The protein is D-lactate dehydrogenase of Leuconostoc mesenteroides subsp. cremoris.